The following is an 82-amino-acid chain: Large ribosomal subunit protein bL31B (82 aa).

The protein belongs to the bacterial ribosomal protein bL31 family. Type B subfamily. In terms of assembly, part of the 50S ribosomal subunit.

This Bacillus velezensis (strain DSM 23117 / BGSC 10A6 / LMG 26770 / FZB42) (Bacillus amyloliquefaciens subsp. plantarum) protein is Large ribosomal subunit protein bL31B.